A 369-amino-acid chain; its full sequence is DNA replication and repair protein RecF (369 aa).

Residue 30-37 coordinates ATP; sequence GDNGSGKT.

It belongs to the RecF family.

It is found in the cytoplasm. In terms of biological role, the RecF protein is involved in DNA metabolism; it is required for DNA replication and normal SOS inducibility. RecF binds preferentially to single-stranded, linear DNA. It also seems to bind ATP. The chain is DNA replication and repair protein RecF from Pseudomonas aeruginosa (strain LESB58).